A 293-amino-acid polypeptide reads, in one-letter code: ATP synthase gamma chain (293 aa).

Belongs to the ATPase gamma chain family. As to quaternary structure, F-type ATPases have 2 components, CF(1) - the catalytic core - and CF(0) - the membrane proton channel. CF(1) has five subunits: alpha(3), beta(3), gamma(1), delta(1), epsilon(1). CF(0) has three main subunits: a, b and c.

The protein resides in the cell inner membrane. In terms of biological role, produces ATP from ADP in the presence of a proton gradient across the membrane. The gamma chain is believed to be important in regulating ATPase activity and the flow of protons through the CF(0) complex. In Allorhizobium ampelinum (strain ATCC BAA-846 / DSM 112012 / S4) (Agrobacterium vitis (strain S4)), this protein is ATP synthase gamma chain.